Consider the following 441-residue polypeptide: Probable dihydroorotase-like protein (441 aa).

The interval Val121–Ala140 is disordered.

The protein belongs to the metallo-dependent hydrolases superfamily. DHOase family. PyrC' subfamily.

Its function is as follows. Non-functional DHOase. This is Probable dihydroorotase-like protein (pyrC') from Synechocystis sp. (strain ATCC 27184 / PCC 6803 / Kazusa).